A 651-amino-acid polypeptide reads, in one-letter code: Threonine--tRNA ligase (651 aa).

The TGS domain occupies M1–K61. The segment at D242–P541 is catalytic. Zn(2+)-binding residues include C337, H388, and H518.

The protein belongs to the class-II aminoacyl-tRNA synthetase family. In terms of assembly, homodimer. The cofactor is Zn(2+).

The protein resides in the cytoplasm. It carries out the reaction tRNA(Thr) + L-threonine + ATP = L-threonyl-tRNA(Thr) + AMP + diphosphate + H(+). Functionally, catalyzes the attachment of threonine to tRNA(Thr) in a two-step reaction: L-threonine is first activated by ATP to form Thr-AMP and then transferred to the acceptor end of tRNA(Thr). Also edits incorrectly charged L-seryl-tRNA(Thr). The chain is Threonine--tRNA ligase from Parabacteroides distasonis (strain ATCC 8503 / DSM 20701 / CIP 104284 / JCM 5825 / NCTC 11152).